Consider the following 444-residue polypeptide: MARKPGQDFRSAQSGLSELKSRLFFVIGALLVFRAGSFVPIPGIDAAVLAELFEQQKGTIVEMFNMFSGGALERASILALGIMPYISASIVVQLLTVVHPALAELKKEGEAGRRKISQYTRYGTLVLATFQAIGIATGLPNMVNNLVVIDQTMFTLIATVSLVTGTMFLMWLGEQITERGIGNGISILIFAGIVAGLPKAIGQTIEQARQGELHVLLLLLIAVLAFAVIYFVVFMERGQRRIVVNYAKRQQGRKVFAAQSTHLPLKINMAGVIPAIFASSIILFPGTLAQWFGQNGESSTFGWLTDVSLALSPGQPLYVMLYAAAIIFFCFFYTALVFNPRETADNLKKSGAFVPGIRPGEQTAKYIDKVMTRLTLAGALYITFICLIPEFMMVAWNVRFYFGGTSLLIVVVVIMDFMAQVQTHLMSHQYESVLKKANLKGYGR.

10 helical membrane-spanning segments follow: residues 24-44, 77-97, 123-143, 153-173, 181-201, 215-235, 269-289, 318-338, 376-396, and 400-420; these read FFVI…IPGI, ILAL…LLTV, GTLV…PNMV, MFTL…MWLG, IGNG…PKAI, VLLL…VVFM, MAGV…GTLA, YVML…ALVF, LAGA…MVAW, and FYFG…FMAQ.

This sequence belongs to the SecY/SEC61-alpha family. Component of the Sec protein translocase complex. Heterotrimer consisting of SecY, SecE and SecG subunits. The heterotrimers can form oligomers, although 1 heterotrimer is thought to be able to translocate proteins. Interacts with the ribosome. Interacts with SecDF, and other proteins may be involved. Interacts with SecA.

The protein localises to the cell inner membrane. In terms of biological role, the central subunit of the protein translocation channel SecYEG. Consists of two halves formed by TMs 1-5 and 6-10. These two domains form a lateral gate at the front which open onto the bilayer between TMs 2 and 7, and are clamped together by SecE at the back. The channel is closed by both a pore ring composed of hydrophobic SecY resides and a short helix (helix 2A) on the extracellular side of the membrane which forms a plug. The plug probably moves laterally to allow the channel to open. The ring and the pore may move independently. In Vibrio cholerae serotype O1 (strain ATCC 39315 / El Tor Inaba N16961), this protein is Protein translocase subunit SecY.